A 429-amino-acid chain; its full sequence is Saccharopine dehydrogenase-like oxidoreductase (429 aa).

A2 bears the N-acetylalanine mark. S217 carries the phosphoserine modification.

It belongs to the saccharopine dehydrogenase family.

This Bos taurus (Bovine) protein is Saccharopine dehydrogenase-like oxidoreductase (SCCPDH).